The sequence spans 899 residues: Translation initiation factor IF-2 (899 aa).

2 disordered regions span residues lysine 31–glutamine 227 and valine 240–lysine 310. 2 stretches are compositionally biased toward polar residues: residues asparagine 36–serine 47 and serine 73–valine 87. 3 stretches are compositionally biased toward basic and acidic residues: residues serine 101–lysine 173, alanine 181–glutamate 219, and arginine 247–glycine 261. The span at proline 296–phenylalanine 308 shows a compositional bias: polar residues. A tr-type G domain is found at serine 398–glutamate 565. The G1 stretch occupies residues glycine 407 to threonine 414. Glycine 407–threonine 414 is a GTP binding site. The interval glycine 432 to histidine 436 is G2. Positions aspartate 453 to glycine 456 are G3. GTP contacts are provided by residues aspartate 453 to histidine 457 and asparagine 507 to aspartate 510. Residues asparagine 507–aspartate 510 are G4. A G5 region spans residues serine 543–lysine 545.

It belongs to the TRAFAC class translation factor GTPase superfamily. Classic translation factor GTPase family. IF-2 subfamily.

Its subcellular location is the cytoplasm. One of the essential components for the initiation of protein synthesis. Protects formylmethionyl-tRNA from spontaneous hydrolysis and promotes its binding to the 30S ribosomal subunits. Also involved in the hydrolysis of GTP during the formation of the 70S ribosomal complex. The chain is Translation initiation factor IF-2 from Photobacterium profundum (strain SS9).